Here is a 206-residue protein sequence, read N- to C-terminus: Octanoyltransferase (206 aa).

The 177-residue stretch at 30–206 (PETNDEIWLV…EFVTLLNNSI (177 aa)) folds into the BPL/LPL catalytic domain. Substrate contacts are provided by residues 69-76 (RGGQVTYH), 137-139 (SLG), and 150-152 (GIA). Cysteine 168 functions as the Acyl-thioester intermediate in the catalytic mechanism.

It belongs to the LipB family.

The protein resides in the cytoplasm. It catalyses the reaction octanoyl-[ACP] + L-lysyl-[protein] = N(6)-octanoyl-L-lysyl-[protein] + holo-[ACP] + H(+). It functions in the pathway protein modification; protein lipoylation via endogenous pathway; protein N(6)-(lipoyl)lysine from octanoyl-[acyl-carrier-protein]: step 1/2. Functionally, catalyzes the transfer of endogenously produced octanoic acid from octanoyl-acyl-carrier-protein onto the lipoyl domains of lipoate-dependent enzymes. Lipoyl-ACP can also act as a substrate although octanoyl-ACP is likely to be the physiological substrate. This Francisella tularensis subsp. tularensis (strain FSC 198) protein is Octanoyltransferase.